A 120-amino-acid chain; its full sequence is U-scoloptoxin(16)-Er2a (120 aa).

The signal sequence occupies residues 1–26 (MNTVSVVQFLAVGCAVFVLYGRGVFA).

The protein belongs to the scoloptoxin-16 family. In terms of processing, contains 4 disulfide bonds. As to expression, expressed by the venom gland.

The protein localises to the secreted. The chain is U-scoloptoxin(16)-Er2a from Ethmostigmus rubripes (Giant centipede).